The sequence spans 426 residues: Amino acid transporter AVT1H (426 aa).

The next 11 membrane-spanning stretches (helical) occupy residues serine 34 to methionine 54, proline 55 to leucine 75, leucine 110 to serine 130, histidine 148 to isoleucine 168, isoleucine 182 to isoleucine 202, isoleucine 215 to leucine 235, valine 248 to alanine 268, isoleucine 292 to leucine 312, leucine 340 to leucine 360, serine 363 to tryptophan 383, and alanine 392 to serine 412.

It belongs to the amino acid/polyamine transporter 2 family. Amino acid/auxin permease (AAAP) (TC 2.A.18.5) subfamily.

It is found in the membrane. In Arabidopsis thaliana (Mouse-ear cress), this protein is Amino acid transporter AVT1H.